The chain runs to 355 residues: N-acetyl-gamma-glutamyl-phosphate reductase (355 aa).

Residue Cys152 is part of the active site.

It belongs to the NAGSA dehydrogenase family. Type 1 subfamily.

It is found in the cytoplasm. It catalyses the reaction N-acetyl-L-glutamate 5-semialdehyde + phosphate + NADP(+) = N-acetyl-L-glutamyl 5-phosphate + NADPH + H(+). It participates in amino-acid biosynthesis; L-arginine biosynthesis; N(2)-acetyl-L-ornithine from L-glutamate: step 3/4. Its function is as follows. Catalyzes the NADPH-dependent reduction of N-acetyl-5-glutamyl phosphate to yield N-acetyl-L-glutamate 5-semialdehyde. The protein is N-acetyl-gamma-glutamyl-phosphate reductase of Psychrobacter sp. (strain PRwf-1).